A 201-amino-acid polypeptide reads, in one-letter code: Orotate phosphoribosyltransferase (201 aa).

113–121 (EDIITTGKS) provides a ligand contact to 5-phospho-alpha-D-ribose 1-diphosphate. Residues threonine 117 and arginine 145 each contribute to the orotate site.

The protein belongs to the purine/pyrimidine phosphoribosyltransferase family. PyrE subfamily. As to quaternary structure, homodimer. Requires Mg(2+) as cofactor.

The enzyme catalyses orotidine 5'-phosphate + diphosphate = orotate + 5-phospho-alpha-D-ribose 1-diphosphate. The protein operates within pyrimidine metabolism; UMP biosynthesis via de novo pathway; UMP from orotate: step 1/2. Catalyzes the transfer of a ribosyl phosphate group from 5-phosphoribose 1-diphosphate to orotate, leading to the formation of orotidine monophosphate (OMP). The polypeptide is Orotate phosphoribosyltransferase (Helicobacter pylori (strain P12)).